The chain runs to 380 residues: Cell division protein ZipA (380 aa).

Topologically, residues 1–7 (MEDNFRN) are periplasmic. Residues 8-28 (VLIILSAIVITAIFIHGLWTL) traverse the membrane as a helical segment. The Cytoplasmic segment spans residues 29 to 380 (RKQKNPYKLK…DRKSRIALVE (352 aa)).

The protein belongs to the ZipA family. Interacts with FtsZ via their C-terminal domains.

Its subcellular location is the cell inner membrane. Functionally, essential cell division protein that stabilizes the FtsZ protofilaments by cross-linking them and that serves as a cytoplasmic membrane anchor for the Z ring. Also required for the recruitment to the septal ring of downstream cell division proteins. The chain is Cell division protein ZipA from Colwellia psychrerythraea (strain 34H / ATCC BAA-681) (Vibrio psychroerythus).